A 189-amino-acid chain; its full sequence is Putative 3-methyladenine DNA glycosylase (189 aa).

The protein belongs to the DNA glycosylase MPG family.

This is Putative 3-methyladenine DNA glycosylase (mag) from Corynebacterium glutamicum (strain ATCC 13032 / DSM 20300 / JCM 1318 / BCRC 11384 / CCUG 27702 / LMG 3730 / NBRC 12168 / NCIMB 10025 / NRRL B-2784 / 534).